Reading from the N-terminus, the 519-residue chain is Cilia- and flagella-associated protein 53 (519 aa).

Coiled coils occupy residues 80-107 (NRHL…LLES) and 210-339 (LAKE…QEEQ). The disordered stretch occupies residues 498–519 (TTAVHPFRRRDRRCSSSGGQMS).

Belongs to the CFAP53 family.

It localises to the cytoplasm. The protein resides in the cytoskeleton. Its subcellular location is the cilium axoneme. The protein localises to the cilium basal body. Microtubule inner protein (MIP) part of the dynein-decorated doublet microtubules (DMTs) in cilia axoneme, which is required for motile cilia beating. Regulates motility patterns of both 9+0 and 9+2 motile cilia through differential localization and recruitment of axonemal dynein components. Required for cilium motility within the spinal canal and Kuppfer's vesicle and is involved in the establishment of left-right symmetry during embryogenesis. This is Cilia- and flagella-associated protein 53 from Danio rerio (Zebrafish).